We begin with the raw amino-acid sequence, 504 residues long: Probable cytosol aminopeptidase (504 aa).

Residues Lys274 and Asp279 each contribute to the Mn(2+) site. The active site involves Lys286. Mn(2+) is bound by residues Asp297, Asp356, and Glu358. The active site involves Arg360.

This sequence belongs to the peptidase M17 family. The cofactor is Mn(2+).

It is found in the cytoplasm. The enzyme catalyses Release of an N-terminal amino acid, Xaa-|-Yaa-, in which Xaa is preferably Leu, but may be other amino acids including Pro although not Arg or Lys, and Yaa may be Pro. Amino acid amides and methyl esters are also readily hydrolyzed, but rates on arylamides are exceedingly low.. It carries out the reaction Release of an N-terminal amino acid, preferentially leucine, but not glutamic or aspartic acids.. In terms of biological role, presumably involved in the processing and regular turnover of intracellular proteins. Catalyzes the removal of unsubstituted N-terminal amino acids from various peptides. In Gloeobacter violaceus (strain ATCC 29082 / PCC 7421), this protein is Probable cytosol aminopeptidase.